We begin with the raw amino-acid sequence, 318 residues long: Thioredoxin reductase (318 aa).

Residue T36–Q43 participates in FAD binding. C136 and C139 are oxidised to a cystine. D286–A295 serves as a coordination point for FAD.

Belongs to the class-II pyridine nucleotide-disulfide oxidoreductase family. In terms of assembly, homodimer. FAD serves as cofactor.

The protein localises to the cytoplasm. It catalyses the reaction [thioredoxin]-dithiol + NADP(+) = [thioredoxin]-disulfide + NADPH + H(+). In Vibrio cholerae serotype O1 (strain ATCC 39315 / El Tor Inaba N16961), this protein is Thioredoxin reductase (trxB).